The following is a 177-amino-acid chain: Isopentenyl-diphosphate Delta-isomerase 2 (177 aa).

Mn(2+)-binding residues include H24 and H30. Residues 28–160 (MLHRAFSIFV…PDVYTVWFKK (133 aa)) form the Nudix hydrolase domain. Residue C65 is part of the active site. Residue C65 participates in Mg(2+) binding. H67 provides a ligand contact to Mn(2+). Position 85 (E85) interacts with Mg(2+). 2 residues coordinate Mn(2+): E110 and E112. E112 is a catalytic residue.

The protein belongs to the IPP isomerase type 1 family. In terms of assembly, homodimer. Mg(2+) serves as cofactor. Requires Mn(2+) as cofactor.

It localises to the cytoplasm. The enzyme catalyses isopentenyl diphosphate = dimethylallyl diphosphate. It participates in isoprenoid biosynthesis; dimethylallyl diphosphate biosynthesis; dimethylallyl diphosphate from isopentenyl diphosphate: step 1/1. Its function is as follows. Catalyzes the 1,3-allylic rearrangement of the homoallylic substrate isopentenyl (IPP) to its highly electrophilic allylic isomer, dimethylallyl diphosphate (DMAPP). In Photorhabdus laumondii subsp. laumondii (strain DSM 15139 / CIP 105565 / TT01) (Photorhabdus luminescens subsp. laumondii), this protein is Isopentenyl-diphosphate Delta-isomerase 2.